The chain runs to 167 residues: uncharacterized protein (167 aa).

The next 2 helical transmembrane spans lie at 21-41 (KIGLAIFLIGAFINLIHIYKP) and 87-107 (MIITFILVQTTLITLDLYVFG). Residues 136 to 159 (RKQRLKEQREKKEQKKEQKKEKKT) are compositionally biased toward basic and acidic residues. Residues 136-167 (RKQRLKEQREKKEQKKEQKKEKKTERRKKKKL) form a disordered region.

Its subcellular location is the membrane. This is an uncharacterized protein from Schizosaccharomyces pombe (strain 972 / ATCC 24843) (Fission yeast).